Consider the following 149-residue polypeptide: Large ribosomal subunit protein uL13 (149 aa).

It belongs to the universal ribosomal protein uL13 family. As to quaternary structure, part of the 50S ribosomal subunit.

Functionally, this protein is one of the early assembly proteins of the 50S ribosomal subunit, although it is not seen to bind rRNA by itself. It is important during the early stages of 50S assembly. The sequence is that of Large ribosomal subunit protein uL13 from Chlorobium phaeobacteroides (strain DSM 266 / SMG 266 / 2430).